Here is a 501-residue protein sequence, read N- to C-terminus: Solute carrier family 2, facilitated glucose transporter member 5 (501 aa).

N-acetylmethionine is present on Met1. Over 1-18 the chain is Cytoplasmic; sequence MEQQDQSMKEGRLTLVLA. The helical transmembrane segment at 19–39 threads the bilayer; it reads LATLIAAFGSSFQYGYNVAAV. Tyr32 contacts D-fructose. The Extracellular portion of the chain corresponds to 40–68; it reads NSPALLMQQFYNETYYGRTGEFMEDFPLT. N-linked (GlcNAc...) asparagine glycosylation is present at Asn51. A helical transmembrane segment spans residues 69–91; sequence LLWSVTVSMFPFGGFIGSLLVGP. Over 92–98 the chain is Cytoplasmic; sequence LVNKFGR. The chain crosses the membrane as a helical span at residues 99-119; the sequence is KGALLFNNIFSIVPAILMGCS. Over 120–126 the chain is Extracellular; the sequence is RVATSFE. A helical transmembrane segment spans residues 127–149; that stretch reads LIIISRLLVGICAGVSSNVVPMY. The Cytoplasmic segment spans residues 150 to 161; that stretch reads LGELAPKNLRGA. The helical transmembrane segment at 162 to 182 threads the bilayer; the sequence is LGVVPQLFITVGILVAQIFGL. D-fructose is bound at residue Gln167. Topologically, residues 183 to 192 are extracellular; it reads RNLLANVDGW. The helical transmembrane segment at 193-213 threads the bilayer; it reads PILLGLTGVPAALQLLLLPFF. At 214-277 the chain is on the cytoplasmic side; that stretch reads PESPRYLLIQ…LFRMRSLRWQ (64 aa). The chain crosses the membrane as a helical span at residues 278–298; sequence LLSIIVLMGGQQLSGVNAIYY. Residues Gln288 and 296-298 each bind D-fructose; that span reads IYY. Residues 299 to 313 lie on the Extracellular side of the membrane; sequence YADQIYLSAGVPEEH. The chain crosses the membrane as a helical span at residues 314-334; that stretch reads VQYVTAGTGAVNVVMTFCAVF. Topologically, residues 335-342 are cytoplasmic; that stretch reads VVELLGRR. The helical transmembrane segment at 343-363 threads the bilayer; the sequence is LLLLLGFSICLIACCVLTAAL. The Extracellular portion of the chain corresponds to 364–371; that stretch reads ALQDTVSW. A helical transmembrane segment spans residues 372 to 394; that stretch reads MPYISIVCVISYVIGHALGPSPI. His387 provides a ligand contact to D-fructose. Residues 395 to 412 are Cytoplasmic-facing; the sequence is PALLITEIFLQSSRPSAF. The chain crosses the membrane as a helical span at residues 413–433; sequence MVGGSVHWLSNFTVGLIFPFI. Residue 419-420 coordinates D-fructose; sequence HW. Over 434-439 the chain is Extracellular; the sequence is QEGLGP. Residues 440–460 traverse the membrane as a helical segment; the sequence is YSFIVFAVICLLTTIYIFLIV. The Cytoplasmic segment spans residues 461–501; sequence PETKAKTFIEINQIFTKMNKVSEVYPEKEELKELPPVTSEQ.

Detected in skeletal muscle, and in jejunum brush border membrane and basolateral membrane (at protein level). Expressed in small intestine, and at much lower levels in kidney, skeletal muscle, and adipose tissue.

The protein resides in the apical cell membrane. It localises to the cell membrane. Its subcellular location is the sarcolemma. It catalyses the reaction D-fructose(out) = D-fructose(in). The uptake of 2-deoxyglucose is inhibited by cytochalasin B. Fructose transport is inhibited by the flavonoids epigallocatechin gallate and apigenin but not quercetin. Functionally, functions as a fructose transporter that has only low activity with other monosaccharides. Can mediate the uptake of 2-deoxyglucose, but with low efficiency. Essential for fructose uptake in the small intestine. Plays a role in the regulation of salt uptake and blood pressure in response to dietary fructose. Required for the development of high blood pressure in response to high dietary fructose intake. This Homo sapiens (Human) protein is Solute carrier family 2, facilitated glucose transporter member 5.